We begin with the raw amino-acid sequence, 394 residues long: Elongation factor Tu 1 (394 aa).

One can recognise a tr-type G domain in the interval 10 to 204 (KPHVNVGTIG…ALDSYIPEPQ (195 aa)). Positions 19 to 26 (GHVDHGKT) are G1. 19 to 26 (GHVDHGKT) lines the GTP pocket. Residue threonine 26 coordinates Mg(2+). The interval 60-64 (GITIN) is G2. Residues 81 to 84 (DCPG) form a G3 region. GTP-binding positions include 81–85 (DCPGH) and 136–139 (NKCD). Residues 136–139 (NKCD) form a G4 region. Residues 174 to 176 (SAL) are G5.

This sequence belongs to the TRAFAC class translation factor GTPase superfamily. Classic translation factor GTPase family. EF-Tu/EF-1A subfamily. Monomer.

The protein localises to the cytoplasm. The catalysed reaction is GTP + H2O = GDP + phosphate + H(+). GTP hydrolase that promotes the GTP-dependent binding of aminoacyl-tRNA to the A-site of ribosomes during protein biosynthesis. The protein is Elongation factor Tu 1 of Shewanella baltica (strain OS195).